A 349-amino-acid polypeptide reads, in one-letter code: Terpene synthase 2 (349 aa).

The DDxx(x)D/E motif motif lies at 84–89 (DDLFDG). Positions 229-237 (NDCVSYEKE) match the NDxxSxxxD/E motif motif.

This sequence belongs to the terpene synthase family.

It carries out the reaction (2E,6E)-farnesyl diphosphate = (3S)-(+)-asterisca-2(9),6-diene + diphosphate. The catalysed reaction is (2E)-geranyl diphosphate = (Z)-beta-ocimene + diphosphate. The enzyme catalyses (2E)-geranyl diphosphate + H2O = linalool + diphosphate. Its function is as follows. Terpene synthase that converts its substrate farnesyl diphosphate (FPP) into the sesquiterpene (3S)-(+)-asterisca-2(9),6-diene. Is also able to convert geranyl diphosphate (GPP) into a mixture of monoterpenes including (Z)-beta-ocimene, allo-ocimene and linalool. The sequence is that of Terpene synthase 2 from Dictyostelium discoideum (Social amoeba).